The sequence spans 575 residues: Aspartate--tRNA ligase (575 aa).

Residue glutamate 169 coordinates L-aspartate. Residues 193-196 are aspartate; sequence QLFK. Arginine 215 is a binding site for L-aspartate. Residues 215-217 and glutamine 224 each bind ATP; that span reads RDE. Histidine 438 provides a ligand contact to L-aspartate. Residue glutamate 472 coordinates ATP. L-aspartate is bound at residue arginine 479. An ATP-binding site is contributed by 524 to 527; that stretch reads GLDR.

This sequence belongs to the class-II aminoacyl-tRNA synthetase family. Type 1 subfamily. As to quaternary structure, homodimer.

The protein localises to the cytoplasm. The catalysed reaction is tRNA(Asp) + L-aspartate + ATP = L-aspartyl-tRNA(Asp) + AMP + diphosphate. Catalyzes the attachment of L-aspartate to tRNA(Asp) in a two-step reaction: L-aspartate is first activated by ATP to form Asp-AMP and then transferred to the acceptor end of tRNA(Asp). This is Aspartate--tRNA ligase from Mycoplasma capricolum subsp. capricolum (strain California kid / ATCC 27343 / NCTC 10154).